A 532-amino-acid polypeptide reads, in one-letter code: Cilia- and flagella-associated protein 97 (532 aa).

A Phosphoserine modification is found at serine 19. 5 disordered regions span residues 28 to 83 (ETNS…PVEN), 116 to 263 (IPNR…TPDI), 306 to 333 (KAAKKGKEKHEPDVSSKSSSVLDSSLDH), 398 to 421 (LSRQAEKPGSKSTIPRSADHPPKL), and 485 to 532 (GQYS…TAWL). Positions 35–49 (KQNDDPKERIDKDTK) are enriched in basic and acidic residues. Over residues 50–63 (NVNSNTGMQTTENY) the composition is skewed to polar residues. The span at 67-82 (KGNERNVKFPPEHPVE) shows a compositional bias: basic and acidic residues. Over residues 127–139 (GEDDYYTDGEESS) the composition is skewed to acidic residues. Phosphothreonine is present on threonine 133. Phosphoserine is present on residues serine 138 and serine 139. Composition is skewed to low complexity over residues 170–185 (SSSSSSSLSSSSSGSG) and 194–205 (DSHLSDSSPSSK). Phosphoserine is present on serine 218. Residues 227 to 239 (IKSTETQPSSTTP) show a composition bias toward polar residues. Serine 248 bears the Phosphoserine mark. Polar residues predominate over residues 253 to 263 (TDVSPLSTPDI). Over residues 320-329 (SSKSSSVLDS) the composition is skewed to low complexity. Phosphoserine is present on serine 330. Residues 374–450 (GKNYSFTREE…ALLKRLEAVK (77 aa)) are a coiled coil. The segment covering 493 to 503 (SRTSSATSGLS) has biased composition (polar residues).

It belongs to the CFAP97 family.

The protein is Cilia- and flagella-associated protein 97 of Homo sapiens (Human).